Reading from the N-terminus, the 524-residue chain is Calcium-dependent protein kinase 1 (524 aa).

The interval 1 to 34 (MGCSQSSNVKDFKTRRSKFTNGNNYGKSGNNKNS) is disordered. Glycine 2 is lipidated: N-myristoyl glycine. Cysteine 3 carries S-palmitoyl cysteine lipidation. The short motif at 10-20 (KDFKTRRSKFT) is the Basic cluster involved in membrane binding element. Residues serine 17, serine 28, and serine 34 each carry the phosphoserine; by autocatalysis modification. Positions 21-32 (NGNNYGKSGNNK) are enriched in low complexity. One can recognise a Protein kinase domain in the interval 56-325 (YFKVRKLGSG…AKEALNSKWI (270 aa)). Residues 62-70 (LGSGAYGEV) and lysine 85 each bind ATP. Residue serine 64 is modified to Phosphoserine; by PKG; by autocatalysis. Threonine 100 carries the post-translational modification Phosphothreonine; by autocatalysis. Residue serine 118 is modified to Phosphoserine; by autocatalysis. Residue aspartate 191 is the Proton acceptor of the active site. Serine 217 is modified (phosphoserine). The residue at position 220 (serine 220) is a Phosphoserine; by autocatalysis. Threonine 231 bears the Phosphothreonine; by PKG; by autocatalysis mark. Serine 335 is subject to Phosphoserine; by autocatalysis. The short motif at 346-353 (NMRKFEGS) is the J domain autoinhibitory motif element. Residues 346–364 (NMRKFEGSQKLAQAAILFI) form a j domain region. The J domain interacts with the EF-hand domains signature appears at 354-364 (QKLAQAAILFI). EF-hand domains are found at residues 372-407 (EERK…LRSF), 416-451 (NVEE…KQIL), 452-487 (FSEE…TSIS), and 488-521 (EQMW…ICDN). Residues aspartate 385, asparagine 387, aspartate 389, glutamine 391, glutamate 396, aspartate 429, aspartate 431, asparagine 433, tyrosine 435, glutamate 440, aspartate 465, aspartate 467, serine 469, lysine 471, glutamate 476, aspartate 499, asparagine 501, aspartate 503, methionine 505, and glutamate 510 each coordinate Ca(2+).

This sequence belongs to the protein kinase superfamily. Ser/Thr protein kinase family. CDPK subfamily. As to quaternary structure, monomer. Forms a high molecular weight (250 and 400 kDa) complex. Forms a complex composed of CDPK1, PKA regulatory subunit PKAr and 14-3-3I; the complex is formed in merozoites in response to low extracellular level of K(+) and may play a role in microneme secretion. Interacts (when phosphorylated) with 14-3-3I in a Ca(2+)-independent manner; the interaction does not regulate CDPK1 catalytic activity but is required for merozoite invasion of host erythrocytes. Interacts with PKA regulatory subunit PKAr; in a Ca(2+)-dependent manner. Interacts with SERA5 p50 in the late schizont stage. Interacts with inner membrane complex protein IMC1g in late schizonts. Interacts with rhoptry protein RhopH3 in merozoites. The cofactor is Mg(2+). In terms of processing, myristoylated. Myristoylation, palmitoylation and the basic cluster motif are required for the localization to the parasitophorous vacuole membrane. Palmitoylated. Palmitoylation increases in merozoites in response to low level of extracellular K(+) in the host blood. Myristoylation, palmitoylation and the basic cluster motif are required for the localization to the parasitophorous vacuole membrane. Post-translationally, phosphorylation at Ser-64 occurs at late schizont stage and regulates CDPK1 protein-protein interaction. Phosphorylated at Ser-28, Ser-34 and Ser-64 in merozoites in response to low extracellular level of K(+). Phosphorylation at Thr-231 may regulate CDPK1 kinase activity. Phosphorylation increases in response to an increase in intracellular Ca(2+) levels. Autophosphorylated in vitro. Autophosphorylation does not affect membrane localization in vitro.

It localises to the membrane. The protein resides in the cell membrane. The protein localises to the parasitophorous vacuole membrane. Its subcellular location is the cytoplasm. It is found in the cell projection. It localises to the cilium. The protein resides in the flagellum. The protein localises to the host cell membrane. The enzyme catalyses L-seryl-[protein] + ATP = O-phospho-L-seryl-[protein] + ADP + H(+). The catalysed reaction is L-threonyl-[protein] + ATP = O-phospho-L-threonyl-[protein] + ADP + H(+). Its activity is regulated as follows. Activated by calcium. Upon calcium binding to the EF-hand domains, the C-terminus of the junction domain (J domain) undergoes a conformational change which results in the dissociation of the pseudo-substrate inhibitory motif from the catalytic domain. This, in turn may facilitate the autophosphorylation of the activation loop at Thr-231, which leads to the kinase activation. May be negatively regulated by PKA-mediated phosphorylation. Inhibited by purfalcamine. In terms of biological role, calcium-dependent protein kinase which acts as a sensor and effector of intracellular Ca(2+) levels probably in part downstream of cGMP-activated PKG kinase. By phosphorylating various proteins, required for microneme secretion and thus merozoite egress from and invasion of host erythrocytes. During gametogenesis, essential for the development of both male and female gametes. Phosphorylates SERA5 p50 which enhances SERA5 p50 protease activity; however, SERA5 p50 protease activity has been shown in other studies to be controversial. Probably by phosphorylating SERA5 p50, plays a role in merozoite egress from host erythrocytes. Probably prior or during merozoite invasion of host erythrocytes, phosphorylates rhoptry protein RhopH3 which is required for RhopH3 localization to rhoptries and for its secretion. Probably in late schizonts, phosphorylates myosin A tail domain-interacting protein MTIP and glideosome-associated protein 45 GAP45, both of which are components of the motor complex that generates the force required by the parasite to invade host cells. In late schizonts, phosphorylates inner membrane complex protein IMC1g. In late schizonts, phosphorylates PKA regulatory subunit PKAr in a calcium-dependent manner, which may contribute to the dissociation of regulatory PKAr and catalytic PKAc subunits and promote the activation of PKAc. May phosphorylate raf kinase inhibitory protein RKIP which in turn may regulate CDPK1 catalytic activity. May phosphorylate proteins of the host erythrocyte membranes. The polypeptide is Calcium-dependent protein kinase 1 (Plasmodium falciparum (isolate 3D7)).